The primary structure comprises 198 residues: Golgi to ER traffic protein 1 (198 aa).

Topologically, residues 1–6 (MDPFSI) are lumenal. The chain crosses the membrane as a helical span at residues 7 to 26 (LLTLTLIILAQNAVRIVGKS). At 27-110 (QIHQSIWNLY…AIEKYLGLAI (84 aa)) the chain is on the cytoplasmic side. The stretch at 73 to 106 (KWTKLNRKYDQLQTEIKAVSDQVSQQQQAIEKYL) forms a coiled coil. The chain crosses the membrane as a helical span at residues 111 to 131 (SVTTTLPLWLFRFKYRKQPLF). Residues 132–155 (YFPKDTFPSYLEWILSFPSVPQGS) lie on the Lumenal side of the membrane. Residues 156–172 (IGIMFWILLLNKFVSNL) form a helical membrane-spanning segment. The Cytoplasmic portion of the chain corresponds to 173-198 (EFIVKTFSTKVEKPVPIVKVEDLSPK).

The protein belongs to the WRB/GET1 family. As to quaternary structure, component of the Golgi to ER traffic (GET) complex, which is composed of GET1, GET2 and GET3. Within the complex, GET1 and GET2 form a heterotetramer which is stabilized by phosphatidylinositol binding and which binds to the GET3 homodimer.

Its subcellular location is the endoplasmic reticulum membrane. The protein resides in the golgi apparatus membrane. In terms of biological role, required for the post-translational delivery of tail-anchored (TA) proteins to the endoplasmic reticulum. Together with GET2, acts as a membrane receptor for soluble GET3, which recognizes and selectively binds the transmembrane domain of TA proteins in the cytosol. The GET complex cooperates with the HDEL receptor ERD2 to mediate the ATP-dependent retrieval of resident ER proteins that contain a C-terminal H-D-E-L retention signal from the Golgi to the ER. The sequence is that of Golgi to ER traffic protein 1 from Komagataella phaffii (strain GS115 / ATCC 20864) (Yeast).